The following is a 500-amino-acid chain: Phenylalanine--tRNA ligase alpha subunit (500 aa).

L-phenylalanine contacts are provided by residues T343, 382–384, and F423; that span reads QID. E425 is a binding site for Mg(2+). F448 provides a ligand contact to L-phenylalanine.

This sequence belongs to the class-II aminoacyl-tRNA synthetase family. Phe-tRNA synthetase alpha subunit type 2 subfamily. As to quaternary structure, tetramer of two alpha and two beta subunits. It depends on Mg(2+) as a cofactor.

It localises to the cytoplasm. It carries out the reaction tRNA(Phe) + L-phenylalanine + ATP = L-phenylalanyl-tRNA(Phe) + AMP + diphosphate + H(+). The polypeptide is Phenylalanine--tRNA ligase alpha subunit (Pyrococcus abyssi (strain GE5 / Orsay)).